A 1085-amino-acid polypeptide reads, in one-letter code: MPHFTVVPVDGPRRGDYDNLEGLSWVDYGERAEREDSDGQGNHRENSPFLSPLDASRGNDYYDRNLALFEEELDIRPKVSSLLGKLVSYTNLTQGAKEHEEAESGEGGRRRAAKAPSMGTLMGVYLPCLQNIFGVILFLRLTWMVGTAGVLQALLIVLICCCCTLLTAISMSAIATNGVVPAGGSYFMISRSLGPEFGGAVGLCFYLGTTFAAAMYILGAIEILLTYIAPPAAIFYPSGTHDMSSATLNNMRVYGTIFLTFMTLVVFVGVKYVNKFASLFLACVIISILSIYVGGIKSAFDPPVFPVCMLGNRTLSRDQFDICAKTVVVDNETVATRLWTFFCHSPNLTADSCDPYFLLNNVTEIPGIPGAAAGVLQENLWSAYLEKGEVVEKHGLPSTDTLGLKESLSLYVVADIATSFTVLVGIFFPSVTGIMAGSNRSGDLRDAQKSIPVGTILAIVTTSLVYFSSVILFGACIEGVVLRDKYGDGVSRNLVVGTLAWPSPWVIVVGSFFSTCGAGLQSLTGAPRLLQAIAKDNIIPFLRVFGHGKANGEPTWALLLTALIAELGILIASLDMVAPILSMFFLMCYLFVNLACAVQTLLRTPNWRPRFKYYHWALSFLGMSLCLALMFVSSWYYALVAMVIAGMIYKYIEYQGAEKEWGDGIRGLSLSAARYALLRLEEGPPHTKNWRPQLLVLLKLDEDLHVKYPRLLTFASQLKAGKGLTIVGSVIQGSFLESYGEAQAAEQTIKNMMEIEKVKGFCQVVVASKVREGLAHLIQSCGLGGMRHNSVVLGWPYGWRQSEDPRAWKTFIDTVRCTTAAHLALLVPKNIAFYPSNHERYLEGHIDVWWIVHDGGMLMLLPFLLRQHKVWKKCRMRIFTVAQMDDNSIQMKKDLAIFLYHLRLEAEVEVVEMHNSDISAYTYERTLMMEQRSQMLRQMRLTKTERDREAQLVKDRHSALRLESLYSDEEDESVTGADKIQMTWTRDKYMAEPWDPSHAPDNFRELVHIKPDQSNVRRMHTAVKLNEVIVTRSHDARLVLLNMPGPPKNSEGDENYMEFLEVLTEGLERVLLVRGGGREVITIYS.

Residues 1–119 (MPHFTVVPVD…RRAAKAPSMG (119 aa)) lie on the Cytoplasmic side of the membrane. Phosphoserine is present on residues Ser-24, Ser-47, Ser-51, Ser-81, and Ser-88. The disordered stretch occupies residues 32–56 (AEREDSDGQGNHRENSPFLSPLDAS). Residues 120–141 (TLMGVYLPCLQNIFGVILFLRL) traverse the membrane as a discontinuously helical segment. K(+) is bound by residues Asn-131 and Ile-132. Topologically, residues 142–149 (TWMVGTAG) are extracellular. Residues 150–172 (VLQALLIVLICCCCTLLTAISMS) form a helical membrane-spanning segment. Residues 173-196 (AIATNGVVPAGGSYFMISRSLGPE) lie on the Cytoplasmic side of the membrane. A helical membrane pass occupies residues 197-225 (FGGAVGLCFYLGTTFAAAMYILGAIEILL). Tyr-216 is a K(+) binding site. Residues 226–248 (TYIAPPAAIFYPSGTHDMSSATL) are Extracellular-facing. Transmembrane regions (helical) follow at residues 249–271 (NNMRVYGTIFLTFMTLVVFVGVK) and 272–297 (YVNKFASLFLACVIISILSIYVGGIK). Over 298–419 (SAFDPPVFPV…LYVVADIATS (122 aa)) the chain is Extracellular. A disulfide bridge links Cys-308 with Cys-323. 3 N-linked (GlcNAc...) asparagine glycosylation sites follow: Asn-312, Asn-331, and Asn-347. Cys-343 and Cys-353 are oxidised to a cystine. The helical transmembrane segment at 420 to 440 (FTVLVGIFFPSVTGIMAGSNR) threads the bilayer. K(+)-binding residues include Pro-429 and Thr-432. Residues Gly-433, Ile-434, and Met-435 each contribute to the chloride site. Topologically, residues 441–450 (SGDLRDAQKS) are cytoplasmic. Residues 451-473 (IPVGTILAIVTTSLVYFSSVILF) traverse the membrane as a helical segment. The Extracellular portion of the chain corresponds to 474 to 504 (GACIEGVVLRDKYGDGVSRNLVVGTLAWPSP). A helical membrane pass occupies residues 505-531 (WVIVVGSFFSTCGAGLQSLTGAPRLLQ). Residues 532–554 (AIAKDNIIPFLRVFGHGKANGEP) lie on the Cytoplasmic side of the membrane. Helical transmembrane passes span 555 to 575 (TWALLLTALIAELGILIASLD) and 576 to 598 (MVAPILSMFFLMCYLFVNLACAV). Chloride is bound at residue Tyr-589. Over 599 to 612 (QTLLRTPNWRPRFK) the chain is Cytoplasmic. The next 2 membrane-spanning stretches (helical) occupy residues 613-635 (YYHWALSFLGMSLCLALMFVSSW) and 636-651 (YYALVAMVIAGMIYKY). The Cytoplasmic portion of the chain corresponds to 652–1085 (IEYQGAEKEW…GGREVITIYS (434 aa)). Residues 665–681 (IRGLSLSAARYALLRLE) form a scissor helix region. The ATP site is built by Leu-697, Lys-699, Lys-707, Tyr-708, and Val-730. Phosphoserine is present on Ser-734. 3 residues coordinate ATP: Gly-794, Trp-795, and Tyr-797. Phosphoserine is present on residues Ser-916 and Ser-967. Thr-983 is modified (phosphothreonine). Ser-1050 carries the post-translational modification Phosphoserine.

It belongs to the SLC12A transporter family. K/Cl co-transporter subfamily. As to quaternary structure, homodimer; adopts a domain-swap conformation at the scissor helices connecting the transmembrane domain and C-terminal domain. Heterodimer with other K-Cl cotransporters. Post-translationally, N-glycosylated. In terms of processing, phosphorylated, phosphorylation may regulate transporter activity. Ubiquitous.

It is found in the cell membrane. The catalysed reaction is K(+)(in) + chloride(in) = K(+)(out) + chloride(out). With respect to regulation, inhibited by WNK3. Mediates electroneutral potassium-chloride cotransport when activated by cell swelling. May contribute to cell volume homeostasis in single cells. May be involved in the regulation of basolateral Cl(-) exit in NaCl absorbing epithelia. The chain is Solute carrier family 12 member 4 (Slc12a4) from Rattus norvegicus (Rat).